Consider the following 153-residue polypeptide: Ribosome maturation factor RimP (153 aa).

This sequence belongs to the RimP family.

It localises to the cytoplasm. Its function is as follows. Required for maturation of 30S ribosomal subunits. This chain is Ribosome maturation factor RimP, found in Actinobacillus pleuropneumoniae serotype 5b (strain L20).